Here is a 2021-residue protein sequence, read N- to C-terminus: MANISPKLFQKAIQQGLKAALFTTSTAAIMLSSSGALGIAVSGVIATNNNAAFSDNVGNNWNEITAAGVANGTPARGPQNNWAFTYGGDYTITADVADHIITAINVADTTPIGLNIAQNTVVGSIVTGGNLLPVTITAGKSLTLNGNNADAANHGFGAPADNYTGLGNIALGGANAALIIQSAAPAKITLAGNINGGGIITVKTDAAINGTIGNTNALATVNVGAGIATLEGAIIKATTTKLTNAASVLTLTNVNAVLTGAIDNTTGVDNVGVLNLNGALSQVTGNIGNTNALATISVGAGKATLGGAVIKATTTKLTDNASAVTFTNPVVVTGAIDNTGNANNGIVTFTGDSTVTGNIGNTNALATISVGAGKATLGGAIIKATTTKLTDNASAVTFTNPVVVTGAIDNTGNANNGIVTFTGDSTVTGNIGNTNALATISVGAGKATLGGAIIKATTTKLTDNASAVTFTNPVVVTGAIDNTGNANNGIVTFTGDSTVTGNIGNTNALATISVGAGKATLGGAIIKATTTKLTDNASAVTFTNPVVVTGAIDNTGNANNGIVTFTGDSTVTGNIGNTNALATISVGAGKATLGGAIIKATTTKLTDNASAVTFTNPVVVTGAIDNTGNANNGIVTFTGNSTVTGNIGNTNALATVNVGAGIATLEGAVIKATTTKLTNAASVLTLTNVNAVLTGAIDNTTGVDNVGVLNLNGALSQVTGNIGNTNALATISVGAGKATLGGAVIKATTTKLTDNASAVTFTNPVVVTGAIDNTGNANNGIATFTGDSTVTGNIGNTNALATVNVGAGLLRVQGGVVKSNTINLTDNASAVTFTNPVVVTGAIDNTGNANNGIVTFTGDSTVTGNIGNTNALATISVGAGKATLGGAIIKATTTKLTDNASAVTFTNPVVVTGAIDNTGNANNGIVTFTGDSTVTGNIGNTNALATVNVGAGVTLQAGGSLDANNIDFGARSTLEFNGPLDGGGNAIPYYFKGAIANGNNAILNVNTKLLTAYHLTIGTVAEINIGAGNLFAIDASAGDVTILNAQDIHFRALDSALVLSNLTGVGVNNILLAADLVAPGVDEGTVVFDGGVNGLNIGSNVAGAARNIGDVGGNKFNTLLIYNAVTITDDVNLEGIQNVLINNNADFTSSTAFNAGTIQINDATYTIDANNGNLNIPAGNIKFAHADAQLILQNSSGNDRTITLGANIDPDNDDEGIVILNSVTAGKKLTIAGGKTFGGAHKLQDIVFKGEGDFGTAGTTFNTTNIVLDITGQLELGATTANVVLFKDAVQLTQTGNIGGFLDFNAKNGTVTLNNNVNVAGTVKNTGGTNNGTLIVLGASNLNRVNGIAMLKVGAGNVTIAKGGNVKIGEIQGTGTNTLTLPAHFKLTGSINKTGGQALKLNFMNGGSVSGVVGTAANSVGDITTAGATSFASSVNAKGTATLGGTTSFAHTFTNTGAVTLAKGSITSFAKNVTATSFVANSATINFGNSLAFNSNITGSGTTLTLGANQVTYTGTGSFTDTLTLNTTFDGAAKSGGNILIKSGSTLDLSGVSNLALVVTATNFDMNNISPDTKYTVISAETAGGLKPTPKENVKITINNDNRFVDFTFDASTLTLFAEDIAAGVIDEDFAPGGPLANIPNAANIKKSLELMEDAPNGSDARQAFNNFGLMTPLQEADATTHLMQDVVKPSDTIAAVNNQVVASNISSNITALNARMDKVQAGNKGPVSSGDEDMDAKFGAWISPFVGNATQKMCNSISGYKSDTTGGTIGFDGFVSDDLVLGLAYTRADTDIKLKNNKTGDKNKVESNIYSLYGLYSVPYENLFVEAIASYSDNKIRSKSRRVIATTLETVGYQTANGKYKSESYTGQLMAGYTYMMSENINLTPLAGLRYSTIKDKSYKETGTTYQNLTVKGKNYNTFDGLLGAKVSSNINVNEIVLTPELYAMVDYAFKNKVSAIDARLQGMTAPLPTNSFKQSKTSFDVGVGVTAKHKMMEYGINYDTNIGSKYFAQQGSVKVRVNF.

The N-terminal stretch at 1-38 (MANISPKLFQKAIQQGLKAALFTTSTAAIMLSSSGALG) is a signal peptide. The region spanning 1734 to 2021 (DMDAKFGAWI…QGSVKVRVNF (288 aa)) is the Autotransporter domain.

This sequence belongs to the rickettsiae OmpA/OmpB family. Post-translationally, glycosylated.

It is found in the periplasm. It localises to the secreted. The protein resides in the cell surface. The protein localises to the cell outer membrane. Functionally, elicits protective immunity. This is Outer membrane protein A (ompA) from Rickettsia conorii (strain ATCC VR-613 / Malish 7).